A 140-amino-acid polypeptide reads, in one-letter code: Small ribosomal subunit protein uS12 (140 aa).

Residue Asp102 is modified to 3-methylthioaspartic acid. The tract at residues 121-140 (ANRQQSRSKYGAKKPKAAKK) is disordered. A compositionally biased stretch (basic residues) spans 130–140 (YGAKKPKAAKK).

Belongs to the universal ribosomal protein uS12 family. In terms of assembly, part of the 30S ribosomal subunit. Contacts proteins S8 and S17. May interact with IF1 in the 30S initiation complex.

Its function is as follows. With S4 and S5 plays an important role in translational accuracy. Interacts with and stabilizes bases of the 16S rRNA that are involved in tRNA selection in the A site and with the mRNA backbone. Located at the interface of the 30S and 50S subunits, it traverses the body of the 30S subunit contacting proteins on the other side and probably holding the rRNA structure together. The combined cluster of proteins S8, S12 and S17 appears to hold together the shoulder and platform of the 30S subunit. This Alkaliphilus oremlandii (strain OhILAs) (Clostridium oremlandii (strain OhILAs)) protein is Small ribosomal subunit protein uS12.